Consider the following 490-residue polypeptide: Phosphoglucosamine mutase (490 aa).

S139 acts as the Phosphoserine intermediate in catalysis. Mg(2+) contacts are provided by S139, D279, D281, and D283. At S139 the chain carries Phosphoserine.

It belongs to the phosphohexose mutase family. Mg(2+) is required as a cofactor. Activated by phosphorylation.

The enzyme catalyses alpha-D-glucosamine 1-phosphate = D-glucosamine 6-phosphate. Its function is as follows. Catalyzes the conversion of glucosamine-6-phosphate to glucosamine-1-phosphate. This is Phosphoglucosamine mutase from Nostoc punctiforme (strain ATCC 29133 / PCC 73102).